The primary structure comprises 266 residues: Putative hydro-lyase VF_1377 (266 aa).

This sequence belongs to the D-glutamate cyclase family.

This chain is Putative hydro-lyase VF_1377, found in Aliivibrio fischeri (strain ATCC 700601 / ES114) (Vibrio fischeri).